We begin with the raw amino-acid sequence, 277 residues long: 3-methyl-2-oxobutanoate hydroxymethyltransferase (277 aa).

2 residues coordinate Mg(2+): aspartate 53 and aspartate 96. 3-methyl-2-oxobutanoate contacts are provided by residues 53–54 (DS), aspartate 96, and lysine 126. Glutamate 128 contributes to the Mg(2+) binding site. Glutamate 195 functions as the Proton acceptor in the catalytic mechanism.

Belongs to the PanB family. As to quaternary structure, homodecamer; pentamer of dimers. The cofactor is Mg(2+).

It is found in the cytoplasm. It carries out the reaction 3-methyl-2-oxobutanoate + (6R)-5,10-methylene-5,6,7,8-tetrahydrofolate + H2O = 2-dehydropantoate + (6S)-5,6,7,8-tetrahydrofolate. Its pathway is cofactor biosynthesis; (R)-pantothenate biosynthesis; (R)-pantoate from 3-methyl-2-oxobutanoate: step 1/2. Its function is as follows. Catalyzes the reversible reaction in which hydroxymethyl group from 5,10-methylenetetrahydrofolate is transferred onto alpha-ketoisovalerate to form ketopantoate. This chain is 3-methyl-2-oxobutanoate hydroxymethyltransferase, found in Chlorobaculum tepidum (strain ATCC 49652 / DSM 12025 / NBRC 103806 / TLS) (Chlorobium tepidum).